Consider the following 226-residue polypeptide: ATP-dependent dethiobiotin synthetase BioD (226 aa).

ATP is bound at residue 12–17 (GVGKTV). Position 16 (threonine 16) interacts with Mg(2+). Lysine 37 is a catalytic residue. Residue threonine 41 coordinates substrate. ATP contacts are provided by residues aspartate 49, 108 to 111 (EGAG), 169 to 170 (GS), and 197 to 199 (PAG). Residues aspartate 49 and glutamate 108 each coordinate Mg(2+).

The protein belongs to the dethiobiotin synthetase family. In terms of assembly, homodimer. It depends on Mg(2+) as a cofactor.

Its subcellular location is the cytoplasm. The enzyme catalyses (7R,8S)-7,8-diammoniononanoate + CO2 + ATP = (4R,5S)-dethiobiotin + ADP + phosphate + 3 H(+). It functions in the pathway cofactor biosynthesis; biotin biosynthesis; biotin from 7,8-diaminononanoate: step 1/2. Functionally, catalyzes a mechanistically unusual reaction, the ATP-dependent insertion of CO2 between the N7 and N8 nitrogen atoms of 7,8-diaminopelargonic acid (DAPA, also called 7,8-diammoniononanoate) to form a ureido ring. The protein is ATP-dependent dethiobiotin synthetase BioD of Mycobacterium bovis (strain BCG / Pasteur 1173P2).